We begin with the raw amino-acid sequence, 435 residues long: Diguanylate cyclase TpbB (435 aa).

The Cytoplasmic portion of the chain corresponds to 1–22 (MNRRRRYTGSNPSLRRVLYRAH). Residues 23-43 (LGVALVAVFTAGLAVTLVGLL) traverse the membrane as a helical segment. Over 44-154 (TLRAYADPNQ…VKGSGGSLLR (111 aa)) the chain is Periplasmic. A helical membrane pass occupies residues 155 to 175 (FLLTGFAGMVLCLLLTALGAF). Over 176–435 (YLSRRLVRGI…DSATPEAPPK (260 aa)) the chain is Cytoplasmic. The HAMP domain maps to 183-236 (RGIVGPLDQLAKVAHTVRRERDFEKRVPEAGIAELSQLGEDFNALLDELESWQA). A GGDEF domain is found at 279–415 (EQLAVLFIDS…GSRRLAELND (137 aa)). Positions 288 and 330 each coordinate Mg(2+). Asp-330 functions as the Proton acceptor in the catalytic mechanism. The span at 413-426 (LNDPRILQEEKEID) shows a compositional bias: basic and acidic residues. Residues 413–435 (LNDPRILQEEKEIDSATPEAPPK) form a disordered region.

In terms of assembly, homodimer. Interacts with YfiR. Requires Mg(2+) as cofactor. In terms of processing, phosphorylated at both Tyr residues and Ser/Thr residues. Dephosphorylated and inactivated by TpbA.

Its subcellular location is the cell inner membrane. The enzyme catalyses 2 GTP = 3',3'-c-di-GMP + 2 diphosphate. The protein operates within purine metabolism; 3',5'-cyclic di-GMP biosynthesis. Its activity is regulated as follows. Activity is tightly controlled by YfiR, a small periplasmic protein, and the OmpA/Pal-like outer-membrane lipoprotein YfiB. Diguanylate cyclase activity is inhibited by the specific interaction of YfiR with the TpbB periplasmic domain and is activated by YfiB, which releases the YfiR-mediated repression through sequestration of YfiR to the outer membrane. Release of repression leads to a conformational shift in TpbB/YfiN that propagates through the PAS and transmembrane domains to switch the cytoplasmic HAMP domain from an inactive to an active conformation and activate the C-terminal catalytic GGDEF domain. Thus, TpbB/YfiN appears to function by switching between discrete inactive and active functional states depending on the presence or absence of bound YfiR. Activity is also controlled by dephosphorylation of the periplasmic domain by the tyrosine phosphatase TpbA. These two mechanisms of regulation could in principle work in parallel or as part of the same regulatory pathway. Does not undergo product feedback inhibition. Functionally, catalyzes the synthesis of cyclic-di-GMP (c-di-GMP) via the condensation of 2 GTP molecules. Part of the YfiB-TpbB-YfiR (or yfiBNR) system, encoding a tripartite signaling module that modulates intracellular c-di-GMP levels. The system is a key regulator of the small colony variant (SCV) phenotype, and plays an important role in biofilm formation and in vivo persistence. The c-di-GMP produced by TpbB/YfiN stimulates the production of the Pel and Psl exopolysaccharides, which promotes surface attachment, generates an SCV phenotype and confers resistance against phagocytosis. The protein is Diguanylate cyclase TpbB of Pseudomonas aeruginosa (strain ATCC 15692 / DSM 22644 / CIP 104116 / JCM 14847 / LMG 12228 / 1C / PRS 101 / PAO1).